Reading from the N-terminus, the 293-residue chain is 4-hydroxy-tetrahydrodipicolinate synthase (293 aa).

Threonine 47 is a pyruvate binding site. Tyrosine 135 (proton donor/acceptor) is an active-site residue. Catalysis depends on lysine 163, which acts as the Schiff-base intermediate with substrate. Pyruvate is bound at residue valine 205.

It belongs to the DapA family. As to quaternary structure, homotetramer; dimer of dimers.

Its subcellular location is the cytoplasm. It carries out the reaction L-aspartate 4-semialdehyde + pyruvate = (2S,4S)-4-hydroxy-2,3,4,5-tetrahydrodipicolinate + H2O + H(+). Its pathway is amino-acid biosynthesis; L-lysine biosynthesis via DAP pathway; (S)-tetrahydrodipicolinate from L-aspartate: step 3/4. In terms of biological role, catalyzes the condensation of (S)-aspartate-beta-semialdehyde [(S)-ASA] and pyruvate to 4-hydroxy-tetrahydrodipicolinate (HTPA). The sequence is that of 4-hydroxy-tetrahydrodipicolinate synthase from Leptothrix cholodnii (strain ATCC 51168 / LMG 8142 / SP-6) (Leptothrix discophora (strain SP-6)).